Consider the following 321-residue polypeptide: Bifunctional ligase/repressor BirA (321 aa).

A DNA-binding region (H-T-H motif) is located at residues 22–41; the sequence is GEQLGETLGMSRAAINKHIQ. One can recognise a BPL/LPL catalytic domain in the interval 67–254; that stretch reads LNAKQILGQL…ELRAALELFE (188 aa). Biotin is bound by residues 89-91, glutamine 112, 116-118, and lysine 183; these read STN and RGR.

The protein belongs to the biotin--protein ligase family. Monomer in solution. Interacts with BCCP. Homodimerizes to bind DNA. Interaction with the corepressor bio-5'-AMP increases dimerization.

The catalysed reaction is biotin + L-lysyl-[protein] + ATP = N(6)-biotinyl-L-lysyl-[protein] + AMP + diphosphate + H(+). With respect to regulation, the switch between the enzymatic activity and the repressor activity is regulated by cellular demand for biotin. The switch occurs by swapping of protein interaction partners by holoBirA. In conditions of high biotin demand, holoBirA associates with apoBCCP to transfer biotin. In conditions of low biotin demand, holoBirA dimerizes, binds DNA and represses transcription of the biotin operon. Acts both as a biotin--[acetyl-CoA-carboxylase] ligase and a biotin-operon repressor. In the presence of ATP, BirA activates biotin to form the BirA-biotinyl-5'-adenylate (BirA-bio-5'-AMP or holoBirA) complex. HoloBirA can either transfer the biotinyl moiety to the biotin carboxyl carrier protein (BCCP) subunit of acetyl-CoA carboxylase, or bind to the biotin operator site and inhibit transcription of the operon. This Escherichia coli (strain K12) protein is Bifunctional ligase/repressor BirA.